Here is a 1050-residue protein sequence, read N- to C-terminus: Bifunctional glutamine synthetase adenylyltransferase/adenylyl-removing enzyme (1050 aa).

The tract at residues 1–531 (MTDPLIHTRK…LHSQLFYRPL (531 aa)) is adenylyl removase. Positions 537 to 1050 (NLSVDAMKLS…LDSVEARREL (514 aa)) are adenylyl transferase.

It belongs to the GlnE family. It depends on Mg(2+) as a cofactor.

It catalyses the reaction [glutamine synthetase]-O(4)-(5'-adenylyl)-L-tyrosine + phosphate = [glutamine synthetase]-L-tyrosine + ADP. The catalysed reaction is [glutamine synthetase]-L-tyrosine + ATP = [glutamine synthetase]-O(4)-(5'-adenylyl)-L-tyrosine + diphosphate. Functionally, involved in the regulation of glutamine synthetase GlnA, a key enzyme in the process to assimilate ammonia. When cellular nitrogen levels are high, the C-terminal adenylyl transferase (AT) inactivates GlnA by covalent transfer of an adenylyl group from ATP to specific tyrosine residue of GlnA, thus reducing its activity. Conversely, when nitrogen levels are low, the N-terminal adenylyl removase (AR) activates GlnA by removing the adenylyl group by phosphorolysis, increasing its activity. The regulatory region of GlnE binds the signal transduction protein PII (GlnB) which indicates the nitrogen status of the cell. The polypeptide is Bifunctional glutamine synthetase adenylyltransferase/adenylyl-removing enzyme (Corynebacterium efficiens (strain DSM 44549 / YS-314 / AJ 12310 / JCM 11189 / NBRC 100395)).